A 72-amino-acid polypeptide reads, in one-letter code: Probable neurotoxin pcD-996 (72 aa).

The signal sequence occupies residues 1-19 (MNYLVMISFALLLVIGVES). Positions 21–72 (RDGYFVEPDNCLVYCMPSPEICDRGCKRYGATSGFCKEFSKGENFCWCKGLR) constitute an LCN-type CS-alpha/beta domain. Disulfide bonds link Cys-35/Cys-56, Cys-42/Cys-66, and Cys-46/Cys-68. Arg-72 is a propeptide (removed by a carboxypeptidase).

The protein belongs to the long (3 C-C) scorpion toxin superfamily. Expressed by the venom gland.

The protein resides in the secreted. This Androctonus australis (Sahara scorpion) protein is Probable neurotoxin pcD-996.